We begin with the raw amino-acid sequence, 891 residues long: Dynein axonemal intermediate chain 3 (891 aa).

Basic residues predominate over residues methionine 1–lysine 17. Positions methionine 1–alanine 22 are disordered. WD repeat units lie at residues glutamate 395 to glutamate 435, glycine 477 to proline 533, isoleucine 670 to leucine 709, and cysteine 713 to alanine 753. The stretch at leucine 818 to aspartate 861 forms a coiled coil.

In terms of assembly, interacts with ACTR2; this interaction reduces binding of the Arp2/3 complex to the VCA domain of nucleation promoting factors. Part of the multisubunit axonemal dynein complex formed at least of two heavy chains and a number of intermediate and light chains. Found in a associated with the catalytic heavy chain DNAH2, the intermediate chain DNAI4, and the light chain DYNLT1.

Its subcellular location is the cytoplasm. Acts as a negative regulator of cell migration, invasion, and metastasis downstream of p53/TP53, through inhibition of Arp2/3 complex-mediated actin polymerization. Via its association with the multisubunit axonemal dynein complex, is potentially involved in the regulation of cilia function. May play a role in osteogenesis of dental tissue-derived mesenchymal stem cells. The protein is Dynein axonemal intermediate chain 3 of Homo sapiens (Human).